A 176-amino-acid polypeptide reads, in one-letter code: Protein CURLY FLAG LEAF 2 (176 aa).

An EAR motif is present at residues 41-46 (FLELSS). The 35-residue stretch at 48–82 (FSVPSHLEQCLDLKTGEIYYRSWNSGMRVKEDPRK) folds into the WW domain. Disordered regions lie at residues 77-106 (KEDP…SSEE) and 111-130 (YESE…YHKE). Low complexity predominate over residues 93–106 (SSGESSGTVFSSEE).

In terms of assembly, may interact with BHLH122/CFLAP1 and BHLH80/CFLAP2.

Its function is as follows. May negatively regulate the cuticle development by interacting with the HD-ZIP IV transcription factor HDG1. This chain is Protein CURLY FLAG LEAF 2, found in Arabidopsis thaliana (Mouse-ear cress).